A 190-amino-acid polypeptide reads, in one-letter code: Threonylcarbamoyl-AMP synthase (190 aa).

The region spanning 10–190 (PQDKESVYRH…DWHSRQVIRA (181 aa)) is the YrdC-like domain.

The protein belongs to the SUA5 family. TsaC subfamily.

It is found in the cytoplasm. It catalyses the reaction L-threonine + hydrogencarbonate + ATP = L-threonylcarbamoyladenylate + diphosphate + H2O. Its function is as follows. Required for the formation of a threonylcarbamoyl group on adenosine at position 37 (t(6)A37) in tRNAs that read codons beginning with adenine. Catalyzes the conversion of L-threonine, HCO(3)(-)/CO(2) and ATP to give threonylcarbamoyl-AMP (TC-AMP) as the acyladenylate intermediate, with the release of diphosphate. This Dichelobacter nodosus (strain VCS1703A) protein is Threonylcarbamoyl-AMP synthase.